The following is a 621-amino-acid chain: Bifunctional protein GlmU (621 aa).

Residues 1 to 229 (MAERDLAVAI…AREIVGINDR (229 aa)) are pyrophosphorylase. UDP-N-acetyl-alpha-D-glucosamine-binding positions include 11 to 14 (LAAG), Lys25, Gln76, and 81 to 82 (GT). Residue Asp106 participates in Mg(2+) binding. UDP-N-acetyl-alpha-D-glucosamine contacts are provided by Gly143, Glu158, Asn173, and Asn227. Asn227 contacts Mg(2+). Residues 230 to 250 (RQLAQAYQILQDRLKEAWMEA) form a linker region. The segment at 251-621 (GVTFVDPDSV…TGVGIPSCPP (371 aa)) is N-acetyltransferase. UDP-N-acetyl-alpha-D-glucosamine is bound by residues Arg332 and Lys350. His362 acts as the Proton acceptor in catalysis. Tyr365 and Asn376 together coordinate UDP-N-acetyl-alpha-D-glucosamine. Acetyl-CoA-binding positions include Ala379, 385 to 386 (NY), Ala422, and Arg441. The tract at residues 601–621 (ATPPSPQRADGTGVGIPSCPP) is disordered.

In the N-terminal section; belongs to the N-acetylglucosamine-1-phosphate uridyltransferase family. It in the C-terminal section; belongs to the transferase hexapeptide repeat family. As to quaternary structure, homotrimer. Requires Mg(2+) as cofactor.

It is found in the cytoplasm. The catalysed reaction is alpha-D-glucosamine 1-phosphate + acetyl-CoA = N-acetyl-alpha-D-glucosamine 1-phosphate + CoA + H(+). The enzyme catalyses N-acetyl-alpha-D-glucosamine 1-phosphate + UTP + H(+) = UDP-N-acetyl-alpha-D-glucosamine + diphosphate. The protein operates within nucleotide-sugar biosynthesis; UDP-N-acetyl-alpha-D-glucosamine biosynthesis; N-acetyl-alpha-D-glucosamine 1-phosphate from alpha-D-glucosamine 6-phosphate (route II): step 2/2. It functions in the pathway nucleotide-sugar biosynthesis; UDP-N-acetyl-alpha-D-glucosamine biosynthesis; UDP-N-acetyl-alpha-D-glucosamine from N-acetyl-alpha-D-glucosamine 1-phosphate: step 1/1. Its pathway is bacterial outer membrane biogenesis; LPS lipid A biosynthesis. Its function is as follows. Catalyzes the last two sequential reactions in the de novo biosynthetic pathway for UDP-N-acetylglucosamine (UDP-GlcNAc). The C-terminal domain catalyzes the transfer of acetyl group from acetyl coenzyme A to glucosamine-1-phosphate (GlcN-1-P) to produce N-acetylglucosamine-1-phosphate (GlcNAc-1-P), which is converted into UDP-GlcNAc by the transfer of uridine 5-monophosphate (from uridine 5-triphosphate), a reaction catalyzed by the N-terminal domain. This is Bifunctional protein GlmU from Synechococcus sp. (strain JA-3-3Ab) (Cyanobacteria bacterium Yellowstone A-Prime).